Here is a 373-residue protein sequence, read N- to C-terminus: Sterol-4-alpha-carboxylate 3-dehydrogenase, decarboxylating (373 aa).

Residue Met1 is modified to N-acetylmethionine. Residue Thr22 is modified to Phosphothreonine. Catalysis depends on Tyr172, which acts as the Proton acceptor. Residue Lys176 participates in NAD(+) binding. Residues 298–318 (WVAYYLALLLSLLVMVISPVI) traverse the membrane as a helical segment. The Prevents secretion from ER motif lies at 370–373 (RRVK).

This sequence belongs to the 3-beta-HSD family. In terms of assembly, homodimer. Brain, heart, liver, lung, kidney, skin and placenta.

Its subcellular location is the endoplasmic reticulum membrane. It localises to the lipid droplet. The catalysed reaction is a 3beta-hydroxysteroid-4alpha-carboxylate + NADP(+) = a 3-oxosteroid + CO2 + NADPH. The enzyme catalyses a 3beta-hydroxysteroid-4alpha-carboxylate + NAD(+) = a 3-oxosteroid + CO2 + NADH. It carries out the reaction 4alpha-carboxyzymosterol + NADP(+) = zymosterone + CO2 + NADPH. It catalyses the reaction 4alpha-carboxy-4beta-methyl-5alpha-cholest-8-en-3beta-ol + NADP(+) = 4alpha-methyl-5alpha-cholest-8-en-3-one + CO2 + NADPH. The catalysed reaction is 4alpha-carboxy-5alpha-cholest-8-ene-3beta-ol + NADP(+) = 5alpha-cholest-8-en-3-one + CO2 + NADPH. The enzyme catalyses 4beta-methylzymosterol-4alpha-carboxylate + NADP(+) = 3-dehydro-4-methylzymosterol + CO2 + NADPH. It carries out the reaction 4beta-methylzymosterol-4alpha-carboxylate + NAD(+) = 3-dehydro-4-methylzymosterol + CO2 + NADH. It catalyses the reaction 4alpha-carboxy-5alpha-cholest-8-ene-3beta-ol + NAD(+) = 5alpha-cholest-8-en-3-one + CO2 + NADH. The catalysed reaction is 4alpha-carboxy-4beta-methyl-5alpha-cholest-8-en-3beta-ol + NAD(+) = 4alpha-methyl-5alpha-cholest-8-en-3-one + CO2 + NADH. The enzyme catalyses 4alpha-carboxyzymosterol + NAD(+) = zymosterone + CO2 + NADH. The protein operates within steroid biosynthesis; zymosterol biosynthesis; zymosterol from lanosterol: step 4/6. Its function is as follows. Catalyzes the NAD(P)(+)-dependent oxidative decarboxylation of the C4 methyl groups of 4-alpha-carboxysterols in post-squalene cholesterol biosynthesis. Also plays a role in the regulation of the endocytic trafficking of EGFR. This chain is Sterol-4-alpha-carboxylate 3-dehydrogenase, decarboxylating (NSDHL), found in Homo sapiens (Human).